The chain runs to 365 residues: MSQRDFYEILGIAKNTDVKQIKKAYKRLAMKHHPDRVKDNKELAEKKFKEIQKAYAILSDTQKRQAYDQFGHAGINGNAGATSGTSFSSSGFGDIFGDIFGGGSQQSNNRGSDLRYDLEIDLKEAAQGTTVKIRIPKNETCDTCSGTGAKPGTSVKTCLTCGGAGQIQIQQGFFAVQRPCNACSGTGQRIESTCNNCHGKGVVHKQKTLSVKIPAGVDTGNRIRLSGEGEAGIRGGLSGDLYVQIHVKKHAIFERQDSDLYCEVPIDFATAVLGGQVEVPTLDNKLNIKVPAGTQTGKLFRLRSKGITHLQHGGSGDVICKVKLETPINLSKKQQDLLQKFSNSCGKKHHPESNSFFGKMKSFFE.

The region spanning 5–71 is the J domain; it reads DFYEILGIAK…QKRQAYDQFG (67 aa). The CR-type zinc-finger motif lies at 128-206; that stretch reads GTTVKIRIPK…CHGKGVVHKQ (79 aa). Zn(2+) contacts are provided by Cys141, Cys144, Cys158, Cys161, Cys180, Cys183, Cys194, and Cys197. CXXCXGXG motif repeat units lie at residues 141–148, 158–165, 180–187, and 194–201; these read CDTCSGTG, CLTCGGAG, CNACSGTG, and CNNCHGKG.

The protein belongs to the DnaJ family. Homodimer. The cofactor is Zn(2+).

It localises to the cytoplasm. Functionally, participates actively in the response to hyperosmotic and heat shock by preventing the aggregation of stress-denatured proteins and by disaggregating proteins, also in an autonomous, DnaK-independent fashion. Unfolded proteins bind initially to DnaJ; upon interaction with the DnaJ-bound protein, DnaK hydrolyzes its bound ATP, resulting in the formation of a stable complex. GrpE releases ADP from DnaK; ATP binding to DnaK triggers the release of the substrate protein, thus completing the reaction cycle. Several rounds of ATP-dependent interactions between DnaJ, DnaK and GrpE are required for fully efficient folding. Also involved, together with DnaK and GrpE, in the DNA replication of plasmids through activation of initiation proteins. The protein is Chaperone protein DnaJ of Vesicomyosocius okutanii subsp. Calyptogena okutanii (strain HA).